The chain runs to 275 residues: 2,3,4,5-tetrahydropyridine-2,6-dicarboxylate N-succinyltransferase (275 aa).

Substrate contacts are provided by R105 and D142.

This sequence belongs to the transferase hexapeptide repeat family. As to quaternary structure, homotrimer.

The protein localises to the cytoplasm. The enzyme catalyses (S)-2,3,4,5-tetrahydrodipicolinate + succinyl-CoA + H2O = (S)-2-succinylamino-6-oxoheptanedioate + CoA. It functions in the pathway amino-acid biosynthesis; L-lysine biosynthesis via DAP pathway; LL-2,6-diaminopimelate from (S)-tetrahydrodipicolinate (succinylase route): step 1/3. This is 2,3,4,5-tetrahydropyridine-2,6-dicarboxylate N-succinyltransferase from Pectobacterium atrosepticum (strain SCRI 1043 / ATCC BAA-672) (Erwinia carotovora subsp. atroseptica).